The primary structure comprises 598 residues: Probable translation initiation factor IF-2 (598 aa).

One can recognise a tr-type G domain in the interval Leu-3–Lys-225. The G1 stretch occupies residues Gly-12 to Thr-19. Gly-12–Thr-19 is a GTP binding site. Residues Gly-37–His-41 form a G2 region. Residues Asp-76–Gly-79 are G3. GTP contacts are provided by residues Asp-76 to His-80 and Asn-130 to Asp-133. A G4 region spans residues Asn-130–Asp-133. The segment at Ser-200–Met-202 is G5.

The protein belongs to the TRAFAC class translation factor GTPase superfamily. Classic translation factor GTPase family. IF-2 subfamily.

Its function is as follows. Function in general translation initiation by promoting the binding of the formylmethionine-tRNA to ribosomes. Seems to function along with eIF-2. This Methanococcus maripaludis (strain C5 / ATCC BAA-1333) protein is Probable translation initiation factor IF-2.